Here is a 258-residue protein sequence, read N- to C-terminus: Ribosomal RNA large subunit methyltransferase E (258 aa).

G58, W60, D78, D96, and D120 together coordinate S-adenosyl-L-methionine. K160 acts as the Proton acceptor in catalysis.

Belongs to the class I-like SAM-binding methyltransferase superfamily. RNA methyltransferase RlmE family.

The protein localises to the cytoplasm. The catalysed reaction is uridine(2552) in 23S rRNA + S-adenosyl-L-methionine = 2'-O-methyluridine(2552) in 23S rRNA + S-adenosyl-L-homocysteine + H(+). Its function is as follows. Specifically methylates the uridine in position 2552 of 23S rRNA at the 2'-O position of the ribose in the fully assembled 50S ribosomal subunit. This Methanococcus maripaludis (strain C5 / ATCC BAA-1333) protein is Ribosomal RNA large subunit methyltransferase E.